The following is an 87-amino-acid chain: Mu-conotoxin cal12b (87 aa).

An N-terminal signal peptide occupies residues 1–19 (MKLTCVLVVLLLLLPYGDL). A propeptide spanning residues 20-42 (ITNNYIRGAARKVTPWRRNLKTR) is cleaved from the precursor. 4 disulfide bridges follow: Cys45–Cys58, Cys53–Cys70, Cys60–Cys75, and Cys69–Cys81. Trp59 is modified (6'-bromotryptophan). 4-hydroxyproline is present on Pro65. Trp79 and Trp80 each carry 6'-bromotryptophan. Pro82 is subject to 4-hydroxyproline. Position 86 is a 6'-bromotryptophan (Trp86).

Expressed by the venom duct.

The protein resides in the secreted. In terms of biological role, mu-conotoxins block voltage-gated sodium channels. This toxin reversibly blocks voltage-gated sodium channel in cephalopods (tested on squid giant-fiber-lobe neurons) with an inhibitor constant (Ki) of 15 nmol/l, with no alteration in the voltage dependence of sodium conductance or on the kinetics of inactivation. Has no effect on sodium channels of the two gastropod S.luhuanus and A.californica (which are not natural prey). The sequence is that of Mu-conotoxin cal12b from Californiconus californicus (California cone).